A 299-amino-acid polypeptide reads, in one-letter code: S-formylglutathione hydrolase (299 aa).

The Cu cation site is built by M1 and H140. Catalysis depends on charge relay system residues S161, D241, and H276.

This sequence belongs to the esterase D family. In terms of assembly, monomer.

The protein localises to the cytoplasm. The catalysed reaction is S-formylglutathione + H2O = formate + glutathione + H(+). In terms of biological role, serine hydrolase involved in the detoxification of formaldehyde. In Saccharomyces cerevisiae (strain ATCC 204508 / S288c) (Baker's yeast), this protein is S-formylglutathione hydrolase.